A 100-amino-acid polypeptide reads, in one-letter code: ATP synthase subunit c (100 aa).

Transmembrane regions (helical) follow at residues 26–46 and 71–91; these read FSVVAAGIGLGVAALGGAIGM and MFIALAMIEAQVIYALVIALI.

This sequence belongs to the ATPase C chain family. As to quaternary structure, F-type ATPases have 2 components, F(1) - the catalytic core - and F(0) - the membrane proton channel. F(1) has five subunits: alpha(3), beta(3), gamma(1), delta(1), epsilon(1). F(0) has three main subunits: a(1), b(2) and c(10-14). The alpha and beta chains form an alternating ring which encloses part of the gamma chain. F(1) is attached to F(0) by a central stalk formed by the gamma and epsilon chains, while a peripheral stalk is formed by the delta and b chains.

Its subcellular location is the cell inner membrane. F(1)F(0) ATP synthase produces ATP from ADP in the presence of a proton or sodium gradient. F-type ATPases consist of two structural domains, F(1) containing the extramembraneous catalytic core and F(0) containing the membrane proton channel, linked together by a central stalk and a peripheral stalk. During catalysis, ATP synthesis in the catalytic domain of F(1) is coupled via a rotary mechanism of the central stalk subunits to proton translocation. Its function is as follows. Key component of the F(0) channel; it plays a direct role in translocation across the membrane. A homomeric c-ring of between 10-14 subunits forms the central stalk rotor element with the F(1) delta and epsilon subunits. The polypeptide is ATP synthase subunit c (Campylobacter fetus subsp. fetus (strain 82-40)).